The chain runs to 201 residues: Nuclear protein UL4 (201 aa).

The protein belongs to the alphaherpesvirinae HHV-1 UL4 family.

Its subcellular location is the host nucleus. This chain is Nuclear protein UL4, found in Human herpesvirus 2 (strain HG52) (HHV-2).